The primary structure comprises 153 residues: ORM1-like protein 2 (153 aa).

Topologically, residues 1-21 (MNVGVAHSEVNPNTRVMSSRG) are cytoplasmic. 2 helical membrane-spanning segments follow: residues 22–42 (IWLA…SIPF) and 43–63 (FSIP…MYLL). Topologically, residues 64 to 105 (LHTVKGTPFETPDQGKDRLLTHWEQIDYGMQCTSSRKFLSIS) are cytoplasmic. The helical transmembrane segment at 106–126 (PVVLYLLTSFYIKYDPAHFMI) threads the bilayer. Residues 127 to 153 (NTASLLSVLLPKLPQFHGVRVFGINKY) lie on the Extracellular side of the membrane.

This sequence belongs to the ORM family. In terms of assembly, ceramide-sensitive subunit of the serine palmitoyltransferase (SPT) complex, which is also composed of SPTLC1, SPTLC2/3 and SPTSSA/B.

The protein localises to the endoplasmic reticulum membrane. Its function is as follows. Plays an essential role in the homeostatic regulation of sphingolipid de novo biosynthesis by modulating the activity of the serine palmitoyltransferase (SPT) in response to ceramide levels. When complexed to SPT, the binding of ceramides to its N-terminus stabilizes a conformation that block SPT substrate entry, hence preventing SPT catalytic activity. Through this mechanism, maintains ceramide levels at sufficient concentrations for the production of complex sphingolipids, but which prevents the accumulation of ceramides to levels that trigger apoptosis. The polypeptide is ORM1-like protein 2 (ORMDL2) (Gallus gallus (Chicken)).